Reading from the N-terminus, the 572-residue chain is AAA ATPase forming ring-shaped complexes (572 aa).

The interval 1-22 (MTEPRHESGSAAPQRPATDPVQ) is disordered. A coiled-coil region spans residues 21 to 67 (VQRQVNLLRDQKRNLDKQAAALASQNEKLVRLLNASRQEIVGLKKTL). Position 270–275 (270–275 (GNGKTL)) interacts with ATP. The span at 527–539 (HEQQDLPDTEDSE) shows a compositional bias: acidic residues. The segment at 527-572 (HEQQDLPDTEDSEDWARLTGRRGDTIDSVHMASHRPQGEPGPGATP) is disordered.

The protein belongs to the AAA ATPase family. Homohexamer. Assembles into a hexameric ring structure.

This chain is AAA ATPase forming ring-shaped complexes, found in Kocuria rhizophila (strain ATCC 9341 / DSM 348 / NBRC 103217 / DC2201).